Here is a 560-residue protein sequence, read N- to C-terminus: uncharacterized protein (560 aa).

The Cytoplasmic portion of the chain corresponds to 1–17; that stretch reads MEPKRKSGSLAKHDLPQ. Residues 18-38 form a helical membrane-spanning segment; the sequence is FYLLIMLYLAQGIPVGLAFGT. The Extracellular segment spans residues 39-54; the sequence is VPFLLKSLAKETSFTS. The chain crosses the membrane as a helical span at residues 55–75; it reads LGIFSMATYPYSLKIIWSPIV. Residues 76-88 lie on the Cytoplasmic side of the membrane; the sequence is DSLYNKRIGRRRS. The helical transmembrane segment at 89–109 threads the bilayer; that stretch reads WIIPVQFVSGFVLWALGWCIS. At 110-139 the chain is on the extracellular side; that stretch reads QGIIFDGVDDAFHNRGNGTLHSVSIKNLTW. The helical transmembrane segment at 140–160 threads the bilayer; sequence WFGLLVFLCATQDIAVDGWAL. Residues 161–172 lie on the Cytoplasmic side of the membrane; it reads TILSKESLSYAS. A helical transmembrane segment spans residues 173-193; that stretch reads TAQTIGLNIGYFMSFTIFLSL. Over 194–214 the chain is Extracellular; it reads NSSDFANKYFRNIPLDHGFIS. The chain crosses the membrane as a helical span at residues 215-235; that stretch reads LGGYMKFSGMLYIVITIYIIF. Residues 236–329 are Cytoplasmic-facing; the sequence is CTKEKPYVEY…KLLEQGFKRE (94 aa). A helical membrane pass occupies residues 330–350; it reads DLAVTVLIDLPFEIIFGYYVV. At 351 to 374 the chain is on the extracellular side; it reads KWSSDKDPMIRDNRRLRNSTGTNK. A helical membrane pass occupies residues 375–395; sequence VIKFLVGDAGVLTPWLWGFLG. The Cytoplasmic portion of the chain corresponds to 396 to 421; it reads RLAAAVLGSYVVKQFPKDGEISTGYF. Residues 422–442 traverse the membrane as a helical segment; sequence CLVIFQHLLGSFMNTVQFIGI. The Extracellular segment spans residues 443–521; that stretch reads SAFHTRVADP…LNGTVTILRD (79 aa). The helical transmembrane segment at 522–542 threads the bilayer; the sequence is GYYITNLICIVVGLFLYFGYL. The Cytoplasmic segment spans residues 543-560; the sequence is KRKILHLQSLPISSWRCT.

The protein localises to the membrane. This is an uncharacterized protein from Saccharomyces cerevisiae (strain ATCC 204508 / S288c) (Baker's yeast).